We begin with the raw amino-acid sequence, 961 residues long: Glycine dehydrogenase (decarboxylating) (961 aa).

An N6-(pyridoxal phosphate)lysine modification is found at Lys-709.

The protein belongs to the GcvP family. The glycine cleavage system is composed of four proteins: P, T, L and H. Pyridoxal 5'-phosphate is required as a cofactor.

It catalyses the reaction N(6)-[(R)-lipoyl]-L-lysyl-[glycine-cleavage complex H protein] + glycine + H(+) = N(6)-[(R)-S(8)-aminomethyldihydrolipoyl]-L-lysyl-[glycine-cleavage complex H protein] + CO2. Functionally, the glycine cleavage system catalyzes the degradation of glycine. The P protein binds the alpha-amino group of glycine through its pyridoxal phosphate cofactor; CO(2) is released and the remaining methylamine moiety is then transferred to the lipoamide cofactor of the H protein. In Streptomyces avermitilis (strain ATCC 31267 / DSM 46492 / JCM 5070 / NBRC 14893 / NCIMB 12804 / NRRL 8165 / MA-4680), this protein is Glycine dehydrogenase (decarboxylating).